Reading from the N-terminus, the 413-residue chain is 3-isopropylmalate dehydratase large subunit (413 aa).

3 residues coordinate [4Fe-4S] cluster: cysteine 293, cysteine 353, and cysteine 356.

This sequence belongs to the aconitase/IPM isomerase family. LeuC type 2 subfamily. As to quaternary structure, heterodimer of LeuC and LeuD. It depends on [4Fe-4S] cluster as a cofactor.

It carries out the reaction (2R,3S)-3-isopropylmalate = (2S)-2-isopropylmalate. It functions in the pathway amino-acid biosynthesis; L-leucine biosynthesis; L-leucine from 3-methyl-2-oxobutanoate: step 2/4. Its function is as follows. Catalyzes the isomerization between 2-isopropylmalate and 3-isopropylmalate, via the formation of 2-isopropylmaleate. This is 3-isopropylmalate dehydratase large subunit from Picrophilus torridus (strain ATCC 700027 / DSM 9790 / JCM 10055 / NBRC 100828 / KAW 2/3).